A 24-amino-acid polypeptide reads, in one-letter code: LLKELWKKIKGAGKAVLGKIKGLL.

The protein belongs to the ponericin-L family. Expressed by the venom gland.

The protein localises to the secreted. Functionally, has a broad spectrum of activity against both Gram-positive and Gram-negative bacteria. Is inactive against yeast, erythrocytes, and insects. This is U1-poneritoxin-Ni2a from Neoponera inversa (Ant).